The primary structure comprises 270 residues: 4-hydroxy-tetrahydrodipicolinate reductase (270 aa).

NAD(+)-binding positions include 9-14 (GAGGRM) and glutamate 35. Arginine 36 provides a ligand contact to NADP(+). NAD(+) contacts are provided by residues 99 to 101 (GTT) and 123 to 126 (ASNF). Histidine 156 serves as the catalytic Proton donor/acceptor. Histidine 157 contacts (S)-2,3,4,5-tetrahydrodipicolinate. Lysine 160 acts as the Proton donor in catalysis. Residue 166 to 167 (GT) participates in (S)-2,3,4,5-tetrahydrodipicolinate binding.

Belongs to the DapB family.

It is found in the cytoplasm. The catalysed reaction is (S)-2,3,4,5-tetrahydrodipicolinate + NAD(+) + H2O = (2S,4S)-4-hydroxy-2,3,4,5-tetrahydrodipicolinate + NADH + H(+). It catalyses the reaction (S)-2,3,4,5-tetrahydrodipicolinate + NADP(+) + H2O = (2S,4S)-4-hydroxy-2,3,4,5-tetrahydrodipicolinate + NADPH + H(+). The protein operates within amino-acid biosynthesis; L-lysine biosynthesis via DAP pathway; (S)-tetrahydrodipicolinate from L-aspartate: step 4/4. Functionally, catalyzes the conversion of 4-hydroxy-tetrahydrodipicolinate (HTPA) to tetrahydrodipicolinate. This Haemophilus influenzae (strain PittEE) protein is 4-hydroxy-tetrahydrodipicolinate reductase.